Consider the following 561-residue polypeptide: Formate--tetrahydrofolate ligase (561 aa).

ATP is bound at residue T66 to T73.

This sequence belongs to the formate--tetrahydrofolate ligase family.

The enzyme catalyses (6S)-5,6,7,8-tetrahydrofolate + formate + ATP = (6R)-10-formyltetrahydrofolate + ADP + phosphate. The protein operates within one-carbon metabolism; tetrahydrofolate interconversion. The sequence is that of Formate--tetrahydrofolate ligase from Methylibium petroleiphilum (strain ATCC BAA-1232 / LMG 22953 / PM1).